The following is a 1480-amino-acid chain: MQRSPLEKASVVSKLFFSWTRPILRKGYRQRLELSDIYQIPSADSADNLSEKLEREWDRELASKKNPKLINALRRCFFWRFMFYGIFLYLGEVTKAVQPLLLGRIIASYDPDNKEERSIAIYLGIGLCLLFIVRTLLLHPAIFGLHHIGMQMRIAMFSLIYKKTLKLSSRVLDKISIGQLVSLLSNNLNKFDEGLALAHFVWIAPLQVALLMGLIWELLQASAFCGLGFLIVLALFQAGLGRMMMKYRDQRAGKISERLVITSEMIENIQSVKAYCWEEAMEKMIENLRQTELKLTRKAAYVRYFNSSAFFFSGFFVVFLSVLPYALIKGIVLRKIFTTISFCIVLRMAVTRQFPWAVQTWYDSLGAINKIQDFLQKQEYKTLEYNLTTTEVVMENVTAFWEEGFGELFEKAKQNNNNRKTSNGDDSLFFSNFSLLGTPVLKDINFKIERGQLLAVAGSTGAGKTSLLMMIMGELEPSEGKIKHSGRISFCSQFSWIMPGTIKENIIFGVSYDEYRYRSVIKACQLEEDISKFAEKDNIVLGEGGITLSGGQRARISLARAVYKDADLYLLDSPFGYLDVLTEKEIFESCICKLMANKTRILVTSKMEHLKKADKILILHEGSSYFYGTFSELQNLRPDFSSKLMGCDSFDQFSAERRNSILTETLRRFSLEGDAPVSWTETKKQSFKQTGEFGEKRKNSILNPINSIRKFSIVPKTPLQMNGIEEDSDEPLERRLSLVPDSEQGEAILPHISVISTGPTLQARRRQSVLNLMTHSINQGQSIHRKTTASTRKVSLAPQANLTELDIYSRRLSQETGLEISEEINEEDLKECFFDDMESIPAVTTWNTYLRYITVHKSLIFVLIWCLVIFLAEVAASLVVLWLLGNTPLQDKGNSTHSRNNSYAVIITSTSSYYVFYIYVGVADTLLAMGFFRGLPLVHTLITVSKILHHKMLHSVLQAPMSTLNTLKAGGILNRFSKDIAILDDLLPLTIFDFIQLLLIVIGAIAVVAVLQPYIFVATVPVIVAFIMLRAYFLQTSQQLKQLESEGRSPIFTHLVTSLKGLWTLRAFGRQPYFETLFHKALNLHTANWFLYLSTLRWFQMRIEMIFVMFFIAVTFISILTTGEGEGRIGIILTLAMNIMSTLQWAVNSSIDVDSLMRSVSRVFKFIDMPTEGKPTKSTKPYKNGQLSKVMIIENSHVKKDDIWPSGGQMTVKDLSAKYTEGGNAILENISFSISPGQRVGLLGRTGSGKSTLLSALLRLLNTEGEIQIDGVSWDSITLQQWRKAFGVIPQKVFIFSGTFRKNLDPYEQWSDQEIWKVADEVGLRSVIEQFPGKLDFVLVDGGCVLSHGHKQLMCLARSVLSKAKILLLDEPSAHLDPVTYQIIRRTLKQAFADCTVILCEHRIEAMLECQQFLVIEENKVRQYDSIQKLLNERSLFRQAISPSDRVKLFPHRNSSKGKSQPQIAALKEETEEEVQDTRL.

At 1–77 (MQRSPLEKAS…KLINALRRCF (77 aa)) the chain is on the cytoplasmic side. Residues 78–98 (FWRFMFYGIFLYLGEVTKAVQ) form a helical membrane-spanning segment. The region spanning 81 to 365 (FMFYGIFLYL…WAVQTWYDSL (285 aa)) is the ABC transmembrane type-1 1 domain. At 99–122 (PLLLGRIIASYDPDNKEERSIAIY) the chain is on the extracellular side. The chain crosses the membrane as a helical span at residues 123–146 (LGIGLCLLFIVRTLLLHPAIFGLH). The Cytoplasmic segment spans residues 147-195 (HIGMQMRIAMFSLIYKKTLKLSSRVLDKISIGQLVSLLSNNLNKFDEGL). The helical transmembrane segment at 196 to 216 (ALAHFVWIAPLQVALLMGLIW) threads the bilayer. The Extracellular segment spans residues 217–222 (ELLQAS). Residues 223–243 (AFCGLGFLIVLALFQAGLGRM) form a helical membrane-spanning segment. Over 244–298 (MMKYRDQRAGKISERLVITSEMIENIQSVKAYCWEEAMEKMIENLRQTELKLTRK) the chain is Cytoplasmic. Residues 299-319 (AAYVRYFNSSAFFFSGFFVVF) form a helical membrane-spanning segment. Residues 320–339 (LSVLPYALIKGIVLRKIFTT) are Extracellular-facing. Residues 340–358 (ISFCIVLRMAVTRQFPWAV) form a helical membrane-spanning segment. The Cytoplasmic segment spans residues 359-858 (QTWYDSLGAI…YLRYITVHKS (500 aa)). ATP contacts are provided by residues tryptophan 401, serine 434, 458 to 465 (GSTGAGKT), and glutamine 493. Residues 423–646 (NGDDSLFFSN…RPDFSSKLMG (224 aa)) enclose the ABC transporter 1 domain. Cysteine 524 is lipidated: S-palmitoyl cysteine. Phosphoserine occurs at positions 549 and 660. The tract at residues 654–831 (SAERRNSILT…EEINEEDLKE (178 aa)) is disordered R region. The residue at position 670 (serine 670) is a Phosphoserine; by PKA. A Phosphoserine modification is found at serine 686. Lysine 688 is covalently cross-linked (Glycyl lysine isopeptide (Lys-Gly) (interchain with G-Cter in ubiquitin)). A phosphoserine mark is found at serine 700 and serine 712. A Phosphothreonine modification is found at threonine 717. Phosphoserine is present on residues serine 737, serine 753, serine 768, serine 790, serine 795, and serine 813. Residues 859 to 879 (LIFVLIWCLVIFLAEVAASLV) traverse the membrane as a helical segment. Residues 859-1155 (LIFVLIWCLV…AVNSSIDVDS (297 aa)) form the ABC transmembrane type-1 2 domain. The Extracellular portion of the chain corresponds to 880 to 918 (VLWLLGNTPLQDKGNSTHSRNNSYAVIITSTSSYYVFYI). 2 N-linked (GlcNAc...) asparagine glycosylation sites follow: asparagine 894 and asparagine 900. The discontinuously helical transmembrane segment at 919-939 (YVGVADTLLAMGFFRGLPLVH) threads the bilayer. The Cytoplasmic portion of the chain corresponds to 940 to 990 (TLITVSKILHHKMLHSVLQAPMSTLNTLKAGGILNRFSKDIAILDDLLPLT). The helical transmembrane segment at 991-1011 (IFDFIQLLLIVIGAIAVVAVL) threads the bilayer. Topologically, residues 1012 to 1013 (QP) are extracellular. A helical membrane pass occupies residues 1014–1034 (YIFVATVPVIVAFIMLRAYFL). Topologically, residues 1035 to 1095 (QTSQQLKQLE…TANWFLYLST (61 aa)) are cytoplasmic. Residues 1096–1116 (LRWFQMRIEMIFVMFFIAVTF) form a helical membrane-spanning segment. Topologically, residues 1117 to 1130 (ISILTTGEGEGRIG) are extracellular. A helical transmembrane segment spans residues 1131–1151 (IILTLAMNIMSTLQWAVNSSI). Topologically, residues 1152 to 1480 (DVDSLMRSVS…TEEEVQDTRL (329 aa)) are cytoplasmic. Positions 1210–1443 (MTVKDLSAKY…RSLFRQAISP (234 aa)) constitute an ABC transporter 2 domain. Residues tyrosine 1219 and 1244–1251 (GRTGSGKS) each bind ATP. Residues 1386-1480 (RTLKQAFADC…TEEEVQDTRL (95 aa)) are interaction with GORASP2. A lipid anchor (S-palmitoyl cysteine) is attached at cysteine 1395. Phosphoserine is present on residues serine 1444 and serine 1456. The interval 1451-1480 (PHRNSSKGKSQPQIAALKEETEEEVQDTRL) is disordered. The span at 1470-1480 (ETEEEVQDTRL) shows a compositional bias: acidic residues. The short motif at 1478 to 1480 (TRL) is the PDZ-binding element.

It belongs to the ABC transporter superfamily. ABCC family. CFTR transporter (TC 3.A.1.202) subfamily. In terms of assembly, monomer; does not require oligomerization for channel activity. May form oligomers in the membrane. Interacts with SLC26A3, SLC26A6 and NHERF1. Interacts with SHANK2. Interacts with MYO6. Interacts (via C-terminus) with GOPC (via PDZ domain); this promotes CFTR internalization and thereby decreases channel activity. Interacts with SLC4A7 through NHERF1. Found in a complex with MYO5B and RAB11A. Interacts with ANO1. Interacts with SLC26A8. Interacts with AHCYL1; the interaction increases CFTR activity. Interacts with CSE1L. The core-glycosylated form interacts with GORASP2 (via PDZ GRASP-type 1 domain) in respone to ER stress. Interacts with MARCHF2; the interaction leads to CFTR ubiqtuitination and degradation. Interacts with ADGRG2. In terms of processing, N-glycosylated. Phosphorylated; cAMP treatment promotes phosphorylation and activates the channel. Dephosphorylation decreases the ATPase activity (in vitro). Phosphorylation at PKA sites activates the channel. Phosphorylation at PKC sites enhances the response to phosphorylation by PKA. Phosphorylated by AMPK; this inhibits channel activity. Post-translationally, ubiquitinated, leading to its degradation in the lysosome. Deubiquitination by USP10 in early endosomes enhances its endocytic recycling to the cell membrane. Ubiquitinated by RNF185 during ER stress. Ubiquitinated by MARCHF2.

Its subcellular location is the apical cell membrane. The protein localises to the early endosome membrane. It is found in the cell membrane. The protein resides in the recycling endosome membrane. It localises to the endoplasmic reticulum membrane. Its subcellular location is the nucleus. The catalysed reaction is ATP + H2O + closed Cl(-) channel = ADP + phosphate + open Cl(-) channel.. It carries out the reaction chloride(in) = chloride(out). It catalyses the reaction hydrogencarbonate(in) = hydrogencarbonate(out). The enzyme catalyses ATP + H2O = ADP + phosphate + H(+). Epithelial ion channel that plays an important role in the regulation of epithelial ion and water transport and fluid homeostasis. Mediates the transport of chloride ions across the cell membrane. Possesses an intrinsic ATPase activity and utilizes ATP to gate its channel; the passive flow of anions through the channel is gated by cycles of ATP binding and hydrolysis by the ATP-binding domains. The ion channel is also permeable to HCO(3)(-); selectivity depends on the extracellular chloride concentration. Exerts its function also by modulating the activity of other ion channels and transporters. Contributes to the regulation of the pH and the ion content of the epithelial fluid layer. Modulates the activity of the epithelial sodium channel (ENaC) complex, in part by regulating the cell surface expression of the ENaC complex. May regulate bicarbonate secretion and salvage in epithelial cells by regulating the transporter SLC4A7. Can inhibit the chloride channel activity of ANO1. Plays a role in the chloride and bicarbonate homeostasis during sperm epididymal maturation and capacitation. This is Cystic fibrosis transmembrane conductance regulator from Nomascus leucogenys (Northern white-cheeked gibbon).